Here is an 867-residue protein sequence, read N- to C-terminus: Leucine--tRNA ligase (867 aa).

Residues 42-52 (PYPSGNLHMGH) carry the 'HIGH' region motif. Positions 625-629 (KMSKS) match the 'KMSKS' region motif. Position 628 (K628) interacts with ATP.

This sequence belongs to the class-I aminoacyl-tRNA synthetase family.

It is found in the cytoplasm. The catalysed reaction is tRNA(Leu) + L-leucine + ATP = L-leucyl-tRNA(Leu) + AMP + diphosphate. The polypeptide is Leucine--tRNA ligase (Blochmanniella floridana).